An 890-amino-acid polypeptide reads, in one-letter code: tRNase Z TRZ3, mitochondrial (890 aa).

A mitochondrion-targeting transit peptide spans 1–44 (MINSMPYLHKNLRLLRLLSSKSSPFPLSLRPFSPRSFSLSTLFS). Positions 46-67 (SSSSSSMENNEATNGSKSSSNS) are disordered.

It belongs to the RNase Z family. Homodimer. The cofactor is Zn(2+). Ca(2+) is required as a cofactor. It depends on Mn(2+) as a cofactor. Requires Mg(2+) as cofactor.

Its subcellular location is the mitochondrion. It is found in the nucleus. The catalysed reaction is Endonucleolytic cleavage of RNA, removing extra 3' nucleotides from tRNA precursor, generating 3' termini of tRNAs. A 3'-hydroxy group is left at the tRNA terminus and a 5'-phosphoryl group is left at the trailer molecule.. In terms of biological role, zinc phosphodiesterase, which displays tRNA 3'-processing endonuclease activity. Involved in tRNA maturation, by removing a 3'-trailer from precursor tRNA. Can process the mitochondrial tRNA-like structures (t-elements). Involved in the processing of small nucleolar RNAs (snoRNAs). The polypeptide is tRNase Z TRZ3, mitochondrial (Arabidopsis thaliana (Mouse-ear cress)).